The chain runs to 633 residues: Early transcription factor 70 kDa subunit (633 aa).

A Helicase ATP-binding domain is found at 32–185 (RTILDHNESV…SNIISIMSDE (154 aa)). 45 to 52 (HIMGSGKT) contacts ATP. Residues 135–138 (DEAH) carry the DEXH box motif. One can recognise a Helicase C-terminal domain in the interval 326 to 505 (KFKYFIDTIG…TLPFDIKKLL (180 aa)).

It belongs to the helicase family. VETF subfamily. In terms of assembly, heterodimer of a 70 kDa and a 82 kDa subunit. Part of the early transcription complex composed of ETF, RAP94, and the DNA-directed RNA polymerase.

The protein resides in the virion. Its function is as follows. Acts with RNA polymerase to initiate transcription from early gene promoters. Is recruited by the RPO-associated protein of 94 kDa (RAP94) to form the early transcription complex, which also contains the core RNA polymerase. ETF heterodimer binds to early gene promoters. The protein is Early transcription factor 70 kDa subunit (VETFS) of Vertebrata (FPV).